The primary structure comprises 420 residues: Protein phosphatase methylesterase 1 (420 aa).

Composition is skewed to low complexity over residues 18–28 (PEAPLLSESSS) and 42–51 (SSVSSTGTVI). The tract at residues 18–51 (PEAPLLSESSSMNHPAESSHDEDSSSVSSTGTVI) is disordered. Residues S197, D223, and H354 contribute to the active site.

It belongs to the AB hydrolase superfamily.

It carries out the reaction [phosphatase 2A protein]-C-terminal L-leucine methyl ester + H2O = [phosphatase 2A protein]-C-terminal L-leucine + methanol + H(+). In terms of biological role, demethylates proteins that have been reversibly carboxymethylated. Demethylates the phosphatase PP2A catalytic subunit. The protein is Protein phosphatase methylesterase 1 (ppe1) of Aspergillus fumigatus (strain ATCC MYA-4609 / CBS 101355 / FGSC A1100 / Af293) (Neosartorya fumigata).